Reading from the N-terminus, the 261-residue chain is Pantothenate synthetase (261 aa).

29–36 (MGALHNGH) provides a ligand contact to ATP. His36 serves as the catalytic Proton donor. Residue Gln60 coordinates (R)-pantoate. Beta-alanine is bound at residue Gln60. 147–150 (GEKD) is a binding site for ATP. Gln153 lines the (R)-pantoate pocket. 184-187 (LSSR) is an ATP binding site.

Belongs to the pantothenate synthetase family. As to quaternary structure, homodimer.

The protein resides in the cytoplasm. The catalysed reaction is (R)-pantoate + beta-alanine + ATP = (R)-pantothenate + AMP + diphosphate + H(+). The protein operates within cofactor biosynthesis; (R)-pantothenate biosynthesis; (R)-pantothenate from (R)-pantoate and beta-alanine: step 1/1. Functionally, catalyzes the condensation of pantoate with beta-alanine in an ATP-dependent reaction via a pantoyl-adenylate intermediate. This chain is Pantothenate synthetase, found in Francisella philomiragia subsp. philomiragia (strain ATCC 25017 / CCUG 19701 / FSC 153 / O#319-036).